The chain runs to 250 residues: ADPR responsive transcriptional repressor NtrR (250 aa).

The region spanning 26–157 (LMTVDMAIFS…DHHDLLQQAF (132 aa)) is the Nudix hydrolase domain. A Nudix box motif is present at residues 62-85 (GFVDLEQDQNLMACAHRKLLEKTG). Positions 164-237 (TRYTALPISL…RFALQDYDFN (74 aa)) are winged helix-like DNA-binding region.

DNA binding is efficiently suppressed in the presence of ADP-ribose (ADPR) or phospho-ADPR. Accumulation of ADPR resulting from NAD degradation may be interpreted by the cell as a signal to activate recycling of nicotinamide. Functionally, involved in the transcriptional regulation of the nondeamidating salvage pathway for production of NAD from nicotinamide. Represses expression of the prs-nadV-nrtR operon by binding to the DNA region located upstream of the operon, thus blocking the nondeamidating pathway. This Acinetobacter baylyi (strain ATCC 33305 / BD413 / ADP1) protein is ADPR responsive transcriptional repressor NtrR.